A 195-amino-acid chain; its full sequence is Pyridoxal 5'-phosphate synthase subunit PdxT (195 aa).

46-48 contacts L-glutamine; sequence GES. Cys-78 serves as the catalytic Nucleophile. L-glutamine-binding positions include Arg-107 and 136–137; that span reads IR. Active-site charge relay system residues include His-173 and Glu-175.

Belongs to the glutaminase PdxT/SNO family. As to quaternary structure, in the presence of PdxS, forms a dodecamer of heterodimers. Only shows activity in the heterodimer.

It catalyses the reaction aldehydo-D-ribose 5-phosphate + D-glyceraldehyde 3-phosphate + L-glutamine = pyridoxal 5'-phosphate + L-glutamate + phosphate + 3 H2O + H(+). It carries out the reaction L-glutamine + H2O = L-glutamate + NH4(+). It participates in cofactor biosynthesis; pyridoxal 5'-phosphate biosynthesis. Functionally, catalyzes the hydrolysis of glutamine to glutamate and ammonia as part of the biosynthesis of pyridoxal 5'-phosphate. The resulting ammonia molecule is channeled to the active site of PdxS. In Dehalococcoides mccartyi (strain ATCC BAA-2100 / JCM 16839 / KCTC 5957 / BAV1), this protein is Pyridoxal 5'-phosphate synthase subunit PdxT.